The sequence spans 722 residues: MQGQTKSVSFDGREIKLTTGRFAPQAGGSVMIECGDTSVLVTATKSSGREGVDFLPLMCDYEERLYAAGRIPGSFMRREGRPPERATLISRLIDRPMRPLFPGWMRDDIQIVATCLSLDERVPADVLAVTGASMATLMAGIPFQGPMAAVRVGLLGDDFVLNPSYREIERGDLDLVVAGTPDGVVMVEAGANQLSEQDVIEAIDFGYEAITELINAQKEVLKESGIKQEMPKAPEIDDTISTYLDKNCTKSISEVLKNFDQTKEERDNKIEEIKISISAKIDGLKDDNAVKKSLSLNNKLLENSYKALTKKLMREQIIKEGKRVDGRELNEVRAIEADAAVLPNRVHGSALFQRGLTQVLSTATLGTPSDAQEMDDLNPNTDKTYIHHYNFPPYSVGETRPMRTPGRREVGHGALAERALIPVLPAKDTFPYVLRVVSEVLSSNGSTSMASVCGSTLALMDAGVPLKAPVGGAAMGLIKEGKEVRILTDIQGIEDFLGDMDFKVAGTEKGITALQMDMKITGLPIETIGEAINQALPARTHILGKMLDAIETPKDNLSPHAPRLLSFRIDPELIGTVIGPGGRTIKGITERTNTKIDIEDGGIVTIASHDGAAAEEAQRIIEGLTRKVHEGEIFPGSITRIIPIGAFVEILPGKEGMIHISQLSEARVEKVEDVVKVGDQVTVRVREIDNRGRINLTLRGVSQNGGMSNYPEPTPTPVAPLT.

Positions 495 and 501 each coordinate Mg(2+). A KH domain is found at 562–621 (PRLLSFRIDPELIGTVIGPGGRTIKGITERTNTKIDIEDGGIVTIASHDGAAAEEAQRII). The region spanning 631–699 (GEIFPGSITR…NRGRINLTLR (69 aa)) is the S1 motif domain. Positions 700-722 (GVSQNGGMSNYPEPTPTPVAPLT) are disordered. Residues 712-722 (EPTPTPVAPLT) are compositionally biased toward pro residues.

The protein belongs to the polyribonucleotide nucleotidyltransferase family. The cofactor is Mg(2+).

Its subcellular location is the cytoplasm. It catalyses the reaction RNA(n+1) + phosphate = RNA(n) + a ribonucleoside 5'-diphosphate. In terms of biological role, involved in mRNA degradation. Catalyzes the phosphorolysis of single-stranded polyribonucleotides processively in the 3'- to 5'-direction. The polypeptide is Polyribonucleotide nucleotidyltransferase (Prochlorococcus marinus (strain NATL1A)).